Consider the following 502-residue polypeptide: Exodeoxyribonuclease 7 large subunit (502 aa).

Residues 474 to 495 (SAPSTTKKSAPKPAAPKAPKTP) are compositionally biased toward low complexity. Residues 474-502 (SAPSTTKKSAPKPAAPKAPKTPGEQGSLF) form a disordered region.

The protein belongs to the XseA family. Heterooligomer composed of large and small subunits.

It is found in the cytoplasm. The catalysed reaction is Exonucleolytic cleavage in either 5'- to 3'- or 3'- to 5'-direction to yield nucleoside 5'-phosphates.. In terms of biological role, bidirectionally degrades single-stranded DNA into large acid-insoluble oligonucleotides, which are then degraded further into small acid-soluble oligonucleotides. The protein is Exodeoxyribonuclease 7 large subunit of Ruegeria sp. (strain TM1040) (Silicibacter sp.).